Reading from the N-terminus, the 141-residue chain is Large ribosomal subunit protein uL11 (141 aa).

It belongs to the universal ribosomal protein uL11 family. In terms of assembly, part of the ribosomal stalk of the 50S ribosomal subunit. Interacts with L10 and the large rRNA to form the base of the stalk. L10 forms an elongated spine to which L12 dimers bind in a sequential fashion forming a multimeric L10(L12)X complex. In terms of processing, one or more lysine residues are methylated.

Functionally, forms part of the ribosomal stalk which helps the ribosome interact with GTP-bound translation factors. The polypeptide is Large ribosomal subunit protein uL11 (Synechococcus sp. (strain CC9311)).